The primary structure comprises 373 residues: PqqA peptide cyclase (373 aa).

The Radical SAM core domain maps to 7–227 (ILNPVGLLAE…EVYAGVIVID (221 aa)). Residues cysteine 21, cysteine 25, and cysteine 28 each contribute to the [4Fe-4S] cluster site.

It belongs to the radical SAM superfamily. PqqE family. Interacts with PqqD. The interaction is necessary for activity of PqqE. [4Fe-4S] cluster serves as cofactor.

The enzyme catalyses [PQQ precursor protein] + S-adenosyl-L-methionine = E-Y cross-linked-[PQQ precursor protein] + 5'-deoxyadenosine + L-methionine + H(+). The protein operates within cofactor biosynthesis; pyrroloquinoline quinone biosynthesis. Its function is as follows. Catalyzes the cross-linking of a glutamate residue and a tyrosine residue in the PqqA protein as part of the biosynthesis of pyrroloquinoline quinone (PQQ). The sequence is that of PqqA peptide cyclase from Methylocella silvestris (strain DSM 15510 / CIP 108128 / LMG 27833 / NCIMB 13906 / BL2).